The sequence spans 210 residues: MGQVFLLMPVLLVSCFLSQGAAIENQRLFNIAVSRVQHLHLLAQKMFNDFDGTLLPDERRQLNKIFLLDFCNSDSIVSPVDKHETQKSSVLKLLHISFRLIESWEYPSQTLIISNSLMVRNANQISEKLSDLKVGINLLITGSQDAYMSLDDNDSQQLPPYGNYYQNLGGDGNVRRNYELLACFKKDMHKVETYLTVAKCRKSLEANCTL.

Residues 1 to 22 (MGQVFLLMPVLLVSCFLSQGAA) form the signal peptide. His-38 serves as a coordination point for Zn(2+). Cysteines 71 and 183 form a disulfide. Glu-192 contributes to the Zn(2+) binding site. Residues Cys-200 and Cys-208 are joined by a disulfide bond.

It belongs to the somatotropin/prolactin family.

Its subcellular location is the secreted. Its function is as follows. Growth hormone plays an important role in growth control and is involved in the regulation of several anabolic processes. Implicated as an osmoregulatory substance important for seawater adaptation. The chain is Somatotropin (gh) from Oncorhynchus tshawytscha (Chinook salmon).